The primary structure comprises 155 residues: uncharacterized protein (155 aa).

The HTH asnC-type domain maps to 4 to 65 (IDEIDEVIVR…VVDPSFFGEF (62 aa)). Residues 23–42 (LTELGRKVGLTASAVKNRIE) constitute a DNA-binding region (H-T-H motif).

This is an uncharacterized protein from Pyrococcus horikoshii (strain ATCC 700860 / DSM 12428 / JCM 9974 / NBRC 100139 / OT-3).